The chain runs to 227 residues: N-(5'-phosphoribosyl)anthranilate isomerase (227 aa).

Belongs to the TrpF family.

The enzyme catalyses N-(5-phospho-beta-D-ribosyl)anthranilate = 1-(2-carboxyphenylamino)-1-deoxy-D-ribulose 5-phosphate. It participates in amino-acid biosynthesis; L-tryptophan biosynthesis; L-tryptophan from chorismate: step 3/5. This is N-(5'-phosphoribosyl)anthranilate isomerase from Herminiimonas arsenicoxydans.